The primary structure comprises 228 residues: PKHD-type hydroxylase XCV3086 (228 aa).

The Fe2OG dioxygenase domain occupies 78–180 (RIYPPLFNRY…RVACFFWTQS (103 aa)). 3 residues coordinate Fe cation: His96, Asp98, and His161. Position 171 (Arg171) interacts with 2-oxoglutarate.

Fe(2+) is required as a cofactor. Requires L-ascorbate as cofactor.

In Xanthomonas euvesicatoria pv. vesicatoria (strain 85-10) (Xanthomonas campestris pv. vesicatoria), this protein is PKHD-type hydroxylase XCV3086.